The primary structure comprises 263 residues: Endonuclease 8 (263 aa).

The Schiff-base intermediate with DNA role is filled by P2. E3 serves as the catalytic Proton donor. K53 serves as the catalytic Proton donor; for beta-elimination activity. DNA-binding residues include Q70, R125, and N169. The FPG-type zinc finger occupies 229–263 (KVFHRDGESCERCGGIIERTMLSSRPFYWCPHCQR). Catalysis depends on R253, which acts as the Proton donor; for delta-elimination activity.

Belongs to the FPG family. The cofactor is Zn(2+).

The enzyme catalyses 2'-deoxyribonucleotide-(2'-deoxyribose 5'-phosphate)-2'-deoxyribonucleotide-DNA = a 3'-end 2'-deoxyribonucleotide-(2,3-dehydro-2,3-deoxyribose 5'-phosphate)-DNA + a 5'-end 5'-phospho-2'-deoxyribonucleoside-DNA + H(+). Its function is as follows. Involved in base excision repair of DNA damaged by oxidation or by mutagenic agents. Acts as a DNA glycosylase that recognizes and removes damaged bases. Has a preference for oxidized pyrimidines, such as thymine glycol, 5,6-dihydrouracil and 5,6-dihydrothymine. Has AP (apurinic/apyrimidinic) lyase activity and introduces nicks in the DNA strand. Cleaves the DNA backbone by beta-delta elimination to generate a single-strand break at the site of the removed base with both 3'- and 5'-phosphates. This chain is Endonuclease 8, found in Pectobacterium carotovorum subsp. carotovorum (strain PC1).